The following is a 536-amino-acid chain: MFS-type efflux pump MFS1 (536 aa).

3 helical membrane passes run 30-50, 80-100, and 102-122; these read VTGLKLAVIVTGLCLSVLLVA, YLLTICAFQLIFGKIYTFFPV, and WVFLIAITIFEIGSAICGAAP. The N-linked (GlcNAc...) asparagine glycan is linked to N123. The next 3 helical transmembrane spans lie at 133–153, 163–183, and 191–211; these read VAGIGSAGIFSGALIIIAYSI, GAIGGMYGIASVAGPLMGGAF, and WCFYINLPIGAVTILSILIFL. N-linked (GlcNAc...) asparagine glycosylation occurs at N221. The next 8 membrane-spanning stretches (helical) occupy residues 234–254, 264–284, 306–326, 342–362, 366–386, 400–420, 426–446, and 503–523; these read IGTAFFMPSIICLLLALQWGG, IIALFVVFAVLISGFIYFQIR, FFLFTIGSAFFIMVYYLPIWF, IPMVLSLVVLSIASGITVTAI, APLYYVSTVLTSIGAGLLTTF, IIFGAGVGTGLQLSIIAAQAV, VAVGTVIMMFCQTLGGALFVS, and TWYVATALAALSVIGSVGMEW.

It belongs to the major facilitator superfamily. TCR/Tet family.

The protein localises to the cell membrane. In terms of biological role, MFS-type efflux pump involved in the modulation susceptibility to azoles, including fluconazole, itraconazole, ketoconazole, miconazole and voriconazole. Confers also increased resistance chloramphenicol and thiamphenicol, suggesting that it acts as a pleiotropic drug transporter with a broad substrate spectrum. Finally, increases the tolerance to cycloheximide when expressed in S.cerevisiae, but not in dermatophyte species. The protein is MFS-type efflux pump MFS1 of Trichophyton rubrum (strain ATCC MYA-4607 / CBS 118892) (Athlete's foot fungus).